A 283-amino-acid polypeptide reads, in one-letter code: Thymidylate synthase (283 aa).

Arg-22 contributes to the dUMP binding site. Cys-160 acts as the Nucleophile in catalysis. Residues Arg-180–Asp-183, Asn-191, and His-221–Tyr-223 contribute to the dUMP site. Residue Asp-183 coordinates (6R)-5,10-methylene-5,6,7,8-tetrahydrofolate. A (6R)-5,10-methylene-5,6,7,8-tetrahydrofolate-binding site is contributed by Ala-282.

Belongs to the thymidylate synthase family. Bacterial-type ThyA subfamily. In terms of assembly, homodimer.

The protein localises to the cytoplasm. The catalysed reaction is dUMP + (6R)-5,10-methylene-5,6,7,8-tetrahydrofolate = 7,8-dihydrofolate + dTMP. It participates in pyrimidine metabolism; dTTP biosynthesis. Functionally, catalyzes the reductive methylation of 2'-deoxyuridine-5'-monophosphate (dUMP) to 2'-deoxythymidine-5'-monophosphate (dTMP) while utilizing 5,10-methylenetetrahydrofolate (mTHF) as the methyl donor and reductant in the reaction, yielding dihydrofolate (DHF) as a by-product. This enzymatic reaction provides an intracellular de novo source of dTMP, an essential precursor for DNA biosynthesis. In Colwellia psychrerythraea (strain 34H / ATCC BAA-681) (Vibrio psychroerythus), this protein is Thymidylate synthase.